The sequence spans 356 residues: Peptide-N(4)-(N-acetyl-beta-glucosaminyl)asparagine amidase (356 aa).

4 residues coordinate Zn(2+): Cys129, Cys132, Cys163, and Cys166. The active-site Nucleophile is Cys189. Residues His216 and Asp233 contribute to the active site. Glu236 is a binding site for substrate. Residues 300–356 (IRQNLSPSEKEELKREDEAEERELASYNADEPQEAQMPRQSGSVEWTKARGEGGSDD) are disordered. Basic and acidic residues-rich tracts occupy residues 307–316 (SEKEELKRED) and 346–356 (TKARGEGGSDD).

This sequence belongs to the transglutaminase-like superfamily. PNGase family. Zn(2+) serves as cofactor.

Its subcellular location is the cytoplasm. It carries out the reaction Hydrolysis of an N(4)-(acetyl-beta-D-glucosaminyl)asparagine residue in which the glucosamine residue may be further glycosylated, to yield a (substituted) N-acetyl-beta-D-glucosaminylamine and a peptide containing an aspartate residue.. Functionally, specifically deglycosylates the denatured form of N-linked glycoproteins in the cytoplasm and assists their proteasome-mediated degradation. Cleaves the beta-aspartyl-glucosamine (GlcNAc) of the glycan and the amide side chain of Asn, converting Asn to Asp. Prefers proteins containing high-mannose over those bearing complex type oligosaccharides. Can recognize misfolded proteins in the endoplasmic reticulum that are exported to the cytosol to be destroyed and deglycosylate them, while it has no activity toward native proteins. Deglycosylation is a prerequisite for subsequent proteasome-mediated degradation of some, but not all, misfolded glycoproteins. The chain is Peptide-N(4)-(N-acetyl-beta-glucosaminyl)asparagine amidase (PNG1) from Yarrowia lipolytica (strain CLIB 122 / E 150) (Yeast).